The following is a 132-amino-acid chain: Small ribosomal subunit protein uS8 (132 aa).

It belongs to the universal ribosomal protein uS8 family. As to quaternary structure, part of the 30S ribosomal subunit. Contacts proteins S5 and S12.

Functionally, one of the primary rRNA binding proteins, it binds directly to 16S rRNA central domain where it helps coordinate assembly of the platform of the 30S subunit. The chain is Small ribosomal subunit protein uS8 from Kineococcus radiotolerans (strain ATCC BAA-149 / DSM 14245 / SRS30216).